Reading from the N-terminus, the 293-residue chain is Protease HtpX (293 aa).

2 consecutive transmembrane segments (helical) span residues 4–24 and 34–54; these read IALF…VLSL and GLMI…LLMS. His139 is a Zn(2+) binding site. Residue Glu140 is part of the active site. His143 serves as a coordination point for Zn(2+). 2 helical membrane-spanning segments follow: residues 158-178 and 193-213; these read VVNT…AGFM and LIYF…ASII. Position 222 (Glu222) interacts with Zn(2+).

Belongs to the peptidase M48B family. Requires Zn(2+) as cofactor.

The protein localises to the cell inner membrane. The protein is Protease HtpX of Escherichia coli (strain ATCC 8739 / DSM 1576 / NBRC 3972 / NCIMB 8545 / WDCM 00012 / Crooks).